Consider the following 464-residue polypeptide: Alpha-2A adrenergic receptor (464 aa).

Residues Met-1–Thr-47 are Extracellular-facing. The interval Trp-13–Gly-34 is disordered. Positions Gln-19 to Gly-29 are enriched in polar residues. Residues Asn-24 and Asn-28 are each glycosylated (N-linked (GlcNAc...) asparagine). The chain crosses the membrane as a helical span at residues Val-48–Phe-73. Residues Thr-74–Leu-84 are Cytoplasmic-facing. A helical transmembrane segment spans residues Phe-85–Met-110. At Gly-111 to Cys-120 the chain is on the extracellular side. Cysteines 120 and 201 form a disulfide. A helical membrane pass occupies residues Glu-121 to Leu-143. The Cytoplasmic segment spans residues Asp-144 to Arg-163. The helical transmembrane segment at Ile-164–Glu-187 threads the bilayer. The Extracellular portion of the chain corresponds to Lys-188–Gln-206. Residues Lys-207–Arg-231 form a helical membrane-spanning segment. At Ile-232–Phe-388 the chain is on the cytoplasmic side. A disordered region spans residues Thr-240 to Gly-378. The segment covering Ala-251–Gly-268 has biased composition (low complexity). The segment covering Ser-312 to Leu-329 has biased composition (basic and acidic residues). A Phosphoserine modification is found at Ser-345. A compositionally biased stretch (gly residues) spans Ala-354 to Pro-363. An Omega-N-methylarginine modification is found at Arg-367. Residues Val-389–Val-413 traverse the membrane as a helical segment. At Gly-414–Lys-423 the chain is on the extracellular side. Residues Phe-424–Asn-444 traverse the membrane as a helical segment. Over His-445 to Val-464 the chain is Cytoplasmic. A lipid anchor (S-palmitoyl cysteine) is attached at Cys-456.

Belongs to the G-protein coupled receptor 1 family. Adrenergic receptor subfamily. ADRA2A sub-subfamily. In terms of assembly, component of the ADA2A-containing complex (ATAC), composed of KAT14, KAT2A, TADA2L, TADA3L, ZZ3, MBIP, WDR5, YEATS2, CCDC101 and DR1.

It localises to the cell membrane. Alpha-2 adrenergic receptors mediate the catecholamine-induced inhibition of adenylate cyclase through the action of G proteins. Component of the ATAC complex, a complex with histone acetyltransferase activity on histones H3 and H4. This is Alpha-2A adrenergic receptor from Cavia porcellus (Guinea pig).